Reading from the N-terminus, the 619-residue chain is MSNTDPQPPQKLPLNWVVWTLAVALMLYYLPAMRDRPEPAIKLPYSEFRMLLREGQISSVTLRGSELDGKFITPRMFPEQRRQYSRFLTQLPDFGNEAILAELEEQNIPLEVKEGHDASSSKVILLSYLPWIMFMIILFWLSRRTFRNFSGRGGAFDFDKRLETQFECQKPDTTFDEVAGQTNAKREVQELVEYLRDPDRFHRVGALAPRGVLLMGPPGTGKTLLARALAGEAGVNFYPMSASEFIEVFVGVGASRVRQLFKIAKENSPSIIFIDELDSVGRTRGAGYGGGHDEREQTLNQILAEMDGFAGHDAVIVLAATNRPDVLDPALMRPGRFDRHVTLDLPDQEGRVAILKVHARHIPLADDVNLNQVAAGTPGFSGADLKNLINEAAIQAARENRDHVHSLDFDIARDKIIMGAERTLIIPPDEKHRLAVHESGHTLVAYYLPNTDPLYKVSIVPHGRSLGGTHQLPLQERHTYPEEYLRDKLAVMLAGRIAERELLGSVSTGADDDIHQATGLARAMVSRWGMSKEVGPVDLRDSEEHPFLGREMAQPHHHSEFSAEIIDKAVRELLVAAETTAADLISTHREKLDRLVALLERSETLHKAQIDECLQTGAS.

Topologically, residues 1–11 (MSNTDPQPPQK) are cytoplasmic. The helical transmembrane segment at 12 to 32 (LPLNWVVWTLAVALMLYYLPA) threads the bilayer. At 33 to 120 (MRDRPEPAIK…EVKEGHDASS (88 aa)) the chain is on the periplasmic side. A helical transmembrane segment spans residues 121–141 (SKVILLSYLPWIMFMIILFWL). At 142–619 (SRRTFRNFSG…IDECLQTGAS (478 aa)) the chain is on the cytoplasmic side. ATP is bound at residue 216-223 (GPPGTGKT). Histidine 437 serves as a coordination point for Zn(2+). Glutamate 438 is an active-site residue. Residues histidine 441 and aspartate 513 each contribute to the Zn(2+) site.

It in the central section; belongs to the AAA ATPase family. In the C-terminal section; belongs to the peptidase M41 family. In terms of assembly, homohexamer. Zn(2+) is required as a cofactor.

It localises to the cell inner membrane. Acts as a processive, ATP-dependent zinc metallopeptidase for both cytoplasmic and membrane proteins. Plays a role in the quality control of integral membrane proteins. This chain is ATP-dependent zinc metalloprotease FtsH, found in Hahella chejuensis (strain KCTC 2396).